Here is a 511-residue protein sequence, read N- to C-terminus: Histidine ammonia-lyase (511 aa).

The 5-imidazolinone (Ala-Gly) cross-link spans 142–144 (ASG). A 2,3-didehydroalanine (Ser) modification is found at Ser143.

It belongs to the PAL/histidase family. Post-translationally, contains an active site 4-methylidene-imidazol-5-one (MIO), which is formed autocatalytically by cyclization and dehydration of residues Ala-Ser-Gly.

It localises to the cytoplasm. It carries out the reaction L-histidine = trans-urocanate + NH4(+). The protein operates within amino-acid degradation; L-histidine degradation into L-glutamate; N-formimidoyl-L-glutamate from L-histidine: step 1/3. This is Histidine ammonia-lyase from Rhizobium rhizogenes (strain K84 / ATCC BAA-868) (Agrobacterium radiobacter).